The primary structure comprises 254 residues: Alcohol dehydrogenase 2 (254 aa).

10–33 is a binding site for NAD(+); that stretch reads FVAGLGGIGFDTSREIVKSGPKNL. Ser-138 contacts substrate. Tyr-151 (proton acceptor) is an active-site residue.

Belongs to the short-chain dehydrogenases/reductases (SDR) family. As to quaternary structure, homodimer.

It catalyses the reaction a primary alcohol + NAD(+) = an aldehyde + NADH + H(+). The enzyme catalyses a secondary alcohol + NAD(+) = a ketone + NADH + H(+). In Drosophila mulleri (Fruit fly), this protein is Alcohol dehydrogenase 2 (Adh2).